The chain runs to 218 residues: Probable transaldolase (218 aa).

K87 functions as the Schiff-base intermediate with substrate in the catalytic mechanism.

This sequence belongs to the transaldolase family. Type 3B subfamily.

It localises to the cytoplasm. The catalysed reaction is D-sedoheptulose 7-phosphate + D-glyceraldehyde 3-phosphate = D-erythrose 4-phosphate + beta-D-fructose 6-phosphate. Its pathway is carbohydrate degradation; pentose phosphate pathway; D-glyceraldehyde 3-phosphate and beta-D-fructose 6-phosphate from D-ribose 5-phosphate and D-xylulose 5-phosphate (non-oxidative stage): step 2/3. Functionally, transaldolase is important for the balance of metabolites in the pentose-phosphate pathway. This chain is Probable transaldolase, found in Parabacteroides distasonis (strain ATCC 8503 / DSM 20701 / CIP 104284 / JCM 5825 / NCTC 11152).